Consider the following 446-residue polypeptide: Enolase (446 aa).

Serine 42 is a binding site for Mg(2+). Residue serine 42 is modified to Phosphoserine. Positions glutamate 104–serine 108 match the Pentapeptide insert motif. An N6-acetyllysine modification is found at lysine 133. Lysine 138 participates in a covalent cross-link: Glycyl lysine isopeptide (Lys-Gly) (interchain with G-Cter in ubiquitin). Tyrosine 139 is modified (phosphotyrosine). Residues histidine 166 and glutamate 175 each contribute to the substrate site. Glutamate 218 functions as the Proton donor in the catalytic mechanism. Residue aspartate 253 coordinates Mg(2+). The short motif at aspartate 277–lysine 282 is the DKSLVK motif element. The Mg(2+) site is built by glutamate 304 and aspartate 331. Substrate-binding residues include glutamate 304 and aspartate 331. The residue at position 339 (threonine 339) is a Phosphothreonine. Lysine 356 (proton acceptor) is an active-site residue. Lysine 375 is subject to N6-acetyllysine. Substrate contacts are provided by residues serine 383–serine 386 and lysine 407.

This sequence belongs to the enolase family. Homodimer. Forms a complex at least composed of DegP, ENO and HSP70. Interacts with G-actin. Interacts (via the DKSLVK motif) with mammalian host PLG/plasminogen (present in the mosquito blood meal); the interaction occurs at the ookinete cell surface and is required for ookinete invasion of the mosquito midgut. Interacts with A.gambiae EBP; depending on the Plasmodium species, the interaction is either involved in ookinete invasion of the mosquito midgut (P.berghei) or is dispensable (P.falciparum). Mg(2+) serves as cofactor.

It is found in the cytoplasm. Its subcellular location is the nucleus. The protein resides in the cytoskeleton. The protein localises to the cell surface. It localises to the cell membrane. It is found in the vacuole. It carries out the reaction (2R)-2-phosphoglycerate = phosphoenolpyruvate + H2O. It functions in the pathway carbohydrate degradation; glycolysis; pyruvate from D-glyceraldehyde 3-phosphate: step 4/5. Its function is as follows. Glycolytic enzyme that catalyzes the conversion of 2-phosphoglycerate to phosphoenolpyruvate. In addition to glycolysis, involved in various processes such as parasite development and invasion. Plays an essential role during ookinete invasion of the mosquito vector midgut by mediating the interaction of the ookinete with the midgut epithelium and, further, by binding to mammalian host plasminogen in the blood meal, whose conversion to active plasmin promotes the invasion process. In Plasmodium falciparum, this protein is Enolase.